The following is a 338-amino-acid chain: tRNA N6-adenosine threonylcarbamoyltransferase (338 aa).

Fe cation contacts are provided by His-111 and His-115. Residues 134–138 (LVSGG), Asp-167, Gly-180, and Asn-272 contribute to the substrate site. Residue Asp-300 participates in Fe cation binding.

This sequence belongs to the KAE1 / TsaD family. Fe(2+) is required as a cofactor.

The protein resides in the cytoplasm. It catalyses the reaction L-threonylcarbamoyladenylate + adenosine(37) in tRNA = N(6)-L-threonylcarbamoyladenosine(37) in tRNA + AMP + H(+). Functionally, required for the formation of a threonylcarbamoyl group on adenosine at position 37 (t(6)A37) in tRNAs that read codons beginning with adenine. Is involved in the transfer of the threonylcarbamoyl moiety of threonylcarbamoyl-AMP (TC-AMP) to the N6 group of A37, together with TsaE and TsaB. TsaD likely plays a direct catalytic role in this reaction. This is tRNA N6-adenosine threonylcarbamoyltransferase from Shewanella oneidensis (strain ATCC 700550 / JCM 31522 / CIP 106686 / LMG 19005 / NCIMB 14063 / MR-1).